The following is a 364-amino-acid chain: Coproporphyrin III ferrochelatase (364 aa).

Positions 29 and 118 each coordinate Fe-coproporphyrin III. The Fe(2+) site is built by His169 and Glu250.

Belongs to the ferrochelatase family.

It localises to the cytoplasm. The catalysed reaction is Fe-coproporphyrin III + 2 H(+) = coproporphyrin III + Fe(2+). The protein operates within porphyrin-containing compound metabolism; protoheme biosynthesis. In terms of biological role, involved in coproporphyrin-dependent heme b biosynthesis. Catalyzes the insertion of ferrous iron into coproporphyrin III to form Fe-coproporphyrin III. This is Coproporphyrin III ferrochelatase from Streptococcus pneumoniae serotype 2 (strain D39 / NCTC 7466).